Consider the following 73-residue polypeptide: Protein SlyX homolog (73 aa).

The protein belongs to the SlyX family.

In Haemophilus influenzae (strain PittEE), this protein is Protein SlyX homolog.